A 427-amino-acid chain; its full sequence is Serine--tRNA ligase (427 aa).

231–233 (TAE) is a binding site for L-serine. 262-264 (RSE) contacts ATP. E285 serves as a coordination point for L-serine. 349–352 (EISS) serves as a coordination point for ATP. Position 385 (S385) interacts with L-serine.

Belongs to the class-II aminoacyl-tRNA synthetase family. Type-1 seryl-tRNA synthetase subfamily. Homodimer. The tRNA molecule binds across the dimer.

The protein localises to the cytoplasm. It carries out the reaction tRNA(Ser) + L-serine + ATP = L-seryl-tRNA(Ser) + AMP + diphosphate + H(+). It catalyses the reaction tRNA(Sec) + L-serine + ATP = L-seryl-tRNA(Sec) + AMP + diphosphate + H(+). It functions in the pathway aminoacyl-tRNA biosynthesis; selenocysteinyl-tRNA(Sec) biosynthesis; L-seryl-tRNA(Sec) from L-serine and tRNA(Sec): step 1/1. Catalyzes the attachment of serine to tRNA(Ser). Is also able to aminoacylate tRNA(Sec) with serine, to form the misacylated tRNA L-seryl-tRNA(Sec), which will be further converted into selenocysteinyl-tRNA(Sec). The protein is Serine--tRNA ligase of Exiguobacterium sp. (strain ATCC BAA-1283 / AT1b).